We begin with the raw amino-acid sequence, 110 residues long: UPF0251 protein PYRAB12660 (110 aa).

This sequence belongs to the UPF0251 family.

The sequence is that of UPF0251 protein PYRAB12660 from Pyrococcus abyssi (strain GE5 / Orsay).